Consider the following 86-residue polypeptide: Large ribosomal subunit protein bL31 (86 aa).

This sequence belongs to the bacterial ribosomal protein bL31 family. Type A subfamily. In terms of assembly, part of the 50S ribosomal subunit.

In terms of biological role, binds the 23S rRNA. This chain is Large ribosomal subunit protein bL31, found in Parasynechococcus marenigrum (strain WH8102).